The following is a 331-amino-acid chain: Glycerol-3-phosphate dehydrogenase [NAD(P)+] (331 aa).

NADPH is bound by residues Trp13, Arg33, and Lys103. Sn-glycerol 3-phosphate contacts are provided by Lys103, Gly131, and Thr133. Ala135 serves as a coordination point for NADPH. Sn-glycerol 3-phosphate is bound by residues Lys187, Asp240, Ser250, Arg251, and Asn252. Catalysis depends on Lys187, which acts as the Proton acceptor. Arg251 lines the NADPH pocket. Residues Val275 and Glu277 each contribute to the NADPH site.

It belongs to the NAD-dependent glycerol-3-phosphate dehydrogenase family.

Its subcellular location is the cytoplasm. It catalyses the reaction sn-glycerol 3-phosphate + NAD(+) = dihydroxyacetone phosphate + NADH + H(+). It carries out the reaction sn-glycerol 3-phosphate + NADP(+) = dihydroxyacetone phosphate + NADPH + H(+). The protein operates within membrane lipid metabolism; glycerophospholipid metabolism. Functionally, catalyzes the reduction of the glycolytic intermediate dihydroxyacetone phosphate (DHAP) to sn-glycerol 3-phosphate (G3P), the key precursor for phospholipid synthesis. This is Glycerol-3-phosphate dehydrogenase [NAD(P)+] from Novosphingobium aromaticivorans (strain ATCC 700278 / DSM 12444 / CCUG 56034 / CIP 105152 / NBRC 16084 / F199).